Here is a 248-residue protein sequence, read N- to C-terminus: 4-hydroxy-tetrahydrodipicolinate reductase (248 aa).

13–18 (GITGRL) is an NAD(+) binding site. An NADP(+)-binding site is contributed by Arg36. NAD(+) contacts are provided by residues 84-86 (GTT) and 108-111 (AANF). His140 serves as the catalytic Proton donor/acceptor. (S)-2,3,4,5-tetrahydrodipicolinate is bound at residue His141. Residue Lys144 is the Proton donor of the active site. 150-151 (GT) serves as a coordination point for (S)-2,3,4,5-tetrahydrodipicolinate.

This sequence belongs to the DapB family.

It is found in the cytoplasm. The enzyme catalyses (S)-2,3,4,5-tetrahydrodipicolinate + NAD(+) + H2O = (2S,4S)-4-hydroxy-2,3,4,5-tetrahydrodipicolinate + NADH + H(+). It catalyses the reaction (S)-2,3,4,5-tetrahydrodipicolinate + NADP(+) + H2O = (2S,4S)-4-hydroxy-2,3,4,5-tetrahydrodipicolinate + NADPH + H(+). Its pathway is amino-acid biosynthesis; L-lysine biosynthesis via DAP pathway; (S)-tetrahydrodipicolinate from L-aspartate: step 4/4. Catalyzes the conversion of 4-hydroxy-tetrahydrodipicolinate (HTPA) to tetrahydrodipicolinate. The polypeptide is 4-hydroxy-tetrahydrodipicolinate reductase (Gluconobacter oxydans (strain 621H) (Gluconobacter suboxydans)).